Reading from the N-terminus, the 68-residue chain is Phycobilisome 7.8 kDa linker polypeptide, allophycocyanin-associated, core (68 aa).

A CpcD-like domain is found at 2 to 57 (ARLFKVTACVPSQTRIRTQRELQNTYFTKLVPFENWFREQQRIMKMGGKIVKVELA).

It belongs to the phycobilisome linker protein family.

The protein localises to the cellular thylakoid membrane. In terms of biological role, rod linker protein, associated with allophycocyanin. Linker polypeptides determine the state of aggregation and the location of the disk-shaped phycobiliprotein units within the phycobilisome and modulate their spectroscopic properties in order to mediate a directed and optimal energy transfer. The chain is Phycobilisome 7.8 kDa linker polypeptide, allophycocyanin-associated, core (apcC) from Microchaete diplosiphon (Fremyella diplosiphon).